The primary structure comprises 234 residues: Thiamine import ATP-binding protein ThiQ (234 aa).

Residues 2-230 (LTLQQVHYYY…HSHPELVEFF (229 aa)) enclose the ABC transporter domain. 32 to 39 (GPSGAGKS) contributes to the ATP binding site.

This sequence belongs to the ABC transporter superfamily. Thiamine importer (TC 3.A.1.19.1) family. As to quaternary structure, the complex is composed of two ATP-binding proteins (ThiQ), two transmembrane proteins (ThiP) and a solute-binding protein (ThiB).

Its subcellular location is the cell inner membrane. The catalysed reaction is thiamine(out) + ATP + H2O = thiamine(in) + ADP + phosphate + H(+). Part of the ABC transporter complex ThiBPQ involved in thiamine import. Responsible for energy coupling to the transport system. This is Thiamine import ATP-binding protein ThiQ from Vibrio vulnificus (strain CMCP6).